The chain runs to 259 residues: UPF0246 protein PputGB1_4560 (259 aa).

Belongs to the UPF0246 family.

The sequence is that of UPF0246 protein PputGB1_4560 from Pseudomonas putida (strain GB-1).